The following is a 262-amino-acid chain: 4-hydroxy-tetrahydrodipicolinate reductase (262 aa).

9-14 contacts NAD(+); the sequence is GCLGRM. Arginine 36 contributes to the NADP(+) binding site. NAD(+) contacts are provided by residues 100-102 and 121-124; these read GTT and SANM. The Proton donor/acceptor role is filled by histidine 154. Position 155 (histidine 155) interacts with (S)-2,3,4,5-tetrahydrodipicolinate. Lysine 158 serves as the catalytic Proton donor. Position 164–165 (164–165) interacts with (S)-2,3,4,5-tetrahydrodipicolinate; the sequence is GT.

This sequence belongs to the DapB family.

The protein resides in the cytoplasm. It catalyses the reaction (S)-2,3,4,5-tetrahydrodipicolinate + NAD(+) + H2O = (2S,4S)-4-hydroxy-2,3,4,5-tetrahydrodipicolinate + NADH + H(+). It carries out the reaction (S)-2,3,4,5-tetrahydrodipicolinate + NADP(+) + H2O = (2S,4S)-4-hydroxy-2,3,4,5-tetrahydrodipicolinate + NADPH + H(+). It participates in amino-acid biosynthesis; L-lysine biosynthesis via DAP pathway; (S)-tetrahydrodipicolinate from L-aspartate: step 4/4. Its function is as follows. Catalyzes the conversion of 4-hydroxy-tetrahydrodipicolinate (HTPA) to tetrahydrodipicolinate. The polypeptide is 4-hydroxy-tetrahydrodipicolinate reductase (Wolbachia pipientis subsp. Culex pipiens (strain wPip)).